A 204-amino-acid polypeptide reads, in one-letter code: Recombination protein RecR (204 aa).

The segment at C58–C75 adopts a C4-type zinc-finger fold. In terms of domain architecture, Toprim spans S83–P181.

The protein belongs to the RecR family.

Its function is as follows. May play a role in DNA repair. It seems to be involved in an RecBC-independent recombinational process of DNA repair. It may act with RecF and RecO. The polypeptide is Recombination protein RecR (Chlorobaculum tepidum (strain ATCC 49652 / DSM 12025 / NBRC 103806 / TLS) (Chlorobium tepidum)).